The chain runs to 610 residues: Elongation factor 4 (610 aa).

The 183-residue stretch at 11–193 (EKIRNFSIIA…QIVEKVPAPT (183 aa)) folds into the tr-type G domain. GTP contacts are provided by residues 23–28 (DHGKST) and 140–143 (NKID).

It belongs to the TRAFAC class translation factor GTPase superfamily. Classic translation factor GTPase family. LepA subfamily.

The protein resides in the cell membrane. It catalyses the reaction GTP + H2O = GDP + phosphate + H(+). Functionally, required for accurate and efficient protein synthesis under certain stress conditions. May act as a fidelity factor of the translation reaction, by catalyzing a one-codon backward translocation of tRNAs on improperly translocated ribosomes. Back-translocation proceeds from a post-translocation (POST) complex to a pre-translocation (PRE) complex, thus giving elongation factor G a second chance to translocate the tRNAs correctly. Binds to ribosomes in a GTP-dependent manner. The polypeptide is Elongation factor 4 (Streptococcus pyogenes serotype M6 (strain ATCC BAA-946 / MGAS10394)).